Consider the following 461-residue polypeptide: Ribitol-5-phosphate transferase FKTN (461 aa).

At 1–7 the chain is on the cytoplasmic side; it reads MSRINKN. The required and sufficient for interaction with POMGNT1 stretch occupies residues 6–27; the sequence is KNVVLALLTLTSSAFLLFQLYY. Residues 8 to 28 traverse the membrane as a helical; Signal-anchor for type II membrane protein segment; that stretch reads VVLALLTLTSSAFLLFQLYYY. Topologically, residues 29–461 are lumenal; it reads KHYLSTRNGA…SEWDEVIQLY (433 aa). N-linked (GlcNAc...) asparagine glycosylation is present at N92.

Belongs to the LicD transferase family. As to quaternary structure, forms a complex composed of FKTN/fukutin, FKRP and RXYLT1/TMEM5. Interacts (via transmembrane domain) with POMGNT1; the interaction is direct and is required for normal POMGNT1 location in Golgi membranes. As to expression, expressed in the retina (at protein level).

It is found in the golgi apparatus membrane. The protein resides in the cytoplasm. It localises to the nucleus. The enzyme catalyses 3-O-[beta-D-GalNAc-(1-&gt;3)-beta-D-GlcNAc-(1-&gt;4)-(O-6-P-alpha-D-Man)]-Thr-[protein] + CDP-L-ribitol = 3-O-[Rib-ol-P-3-beta-D-GalNAc-(1-&gt;3)-beta-D-GlcNAc-(1-&gt;4)-(O-6-P-alpha-D-Man)]-Thr-[protein] + CMP + H(+). It functions in the pathway protein modification; protein glycosylation. Its function is as follows. Catalyzes the transfer of CDP-ribitol to the distal N-acetylgalactosamine of the phosphorylated O-mannosyl trisaccharide (N-acetylgalactosamine-beta-3-N-acetylglucosamine-beta-4-(phosphate-6-)mannose), a carbohydrate structure present in alpha-dystroglycan (DAG1). This constitutes the first step in the formation of the ribitol 5-phosphate tandem repeat which links the phosphorylated O-mannosyl trisaccharide to the ligand binding moiety composed of repeats of 3-xylosyl-alpha-1,3-glucuronic acid-beta-1. May interact with and reinforce a large complex encompassing the outside and inside of muscle membranes. Could be involved in brain development. The protein is Ribitol-5-phosphate transferase FKTN of Macaca fascicularis (Crab-eating macaque).